A 188-amino-acid chain; its full sequence is Elongation factor P (188 aa).

Belongs to the elongation factor P family.

It is found in the cytoplasm. The protein operates within protein biosynthesis; polypeptide chain elongation. Its function is as follows. Involved in peptide bond synthesis. Stimulates efficient translation and peptide-bond synthesis on native or reconstituted 70S ribosomes in vitro. Probably functions indirectly by altering the affinity of the ribosome for aminoacyl-tRNA, thus increasing their reactivity as acceptors for peptidyl transferase. This Chlorobium phaeobacteroides (strain DSM 266 / SMG 266 / 2430) protein is Elongation factor P.